A 276-amino-acid chain; its full sequence is CASP-like protein 4A3 (276 aa).

The segment covering 1-13 (MPSMSPSSISTEK) has biased composition (polar residues). The disordered stretch occupies residues 1 to 76 (MPSMSPSSIS…PVKIEETPSP (76 aa)). The Cytoplasmic portion of the chain corresponds to 1–126 (MPSMSPSSIS…RRSRREEIVK (126 aa)). The segment covering 43-72 (SLDHSSDSEKEDEKRRPESRRNKNPVKIEE) has biased composition (basic and acidic residues). Residues 127–147 (FVALGFRLSEVVLALISFSIM) form a helical membrane-spanning segment. Topologically, residues 148 to 167 (AADKTKGWSGDSFDRYKEYR) are extracellular. The chain crosses the membrane as a helical span at residues 168–188 (FCLSVNVVAFIYASFQACDLA). The Cytoplasmic portion of the chain corresponds to 189–205 (YHLVKEKHLISHHLRPL). A helical transmembrane segment spans residues 206 to 226 (FEFIIDQVLAYLLMCASTAAV). Over 227 to 244 (TRVDDWVSNWGKDDFTEM) the chain is Extracellular. The chain crosses the membrane as a helical span at residues 245 to 265 (ASASIAMSFLTFLAFAFSSLI). The Cytoplasmic portion of the chain corresponds to 266–276 (SGYNLFNQDSL).

This sequence belongs to the Casparian strip membrane proteins (CASP) family. In terms of assembly, homodimer and heterodimers.

It localises to the cell membrane. This is CASP-like protein 4A3 from Arabidopsis lyrata subsp. lyrata (Lyre-leaved rock-cress).